Reading from the N-terminus, the 255-residue chain is Hydroxylmethylpyrimidine kinase (255 aa).

Residues Gly18, Gln43, and Asn110 each coordinate pyridoxal 5'-phosphate. Gln43 lines the 4-amino-5-hydroxymethyl-2-methylpyrimidine pocket. An intrachain disulfide couples Cys195 to Cys207. Position 208 (Ser208) interacts with pyridoxal 5'-phosphate.

It belongs to the ThiD family. In terms of assembly, homodimer. Post-translationally, crystals show a disulfide bond between Cys-195 and Cys-207. This disulfide is possibly an artifact of the purification and crystallization conditions. However, as it is adjacent to the conserved GSGC of the oxyanion hole, this disulfide may help to orient the backbone amides toward the oxanion intermediate.

It catalyses the reaction 4-amino-5-hydroxymethyl-2-methylpyrimidine + ATP = 4-amino-2-methyl-5-(phosphooxymethyl)pyrimidine + ADP + H(+). It participates in cofactor biosynthesis; thiamine diphosphate biosynthesis. Its activity is regulated as follows. Inhibited by pyridoxal phosphate at high micromolar concentrations. In terms of biological role, catalyzes the phosphorylation of hydroxymethylpyrimidine (HMP) to hydroxymethylpyrimidine phosphate (HMP-P). Unlike other HMPKs, it cannot catalyze the phosphorylation of HMP-P to generate the diphosphate HMP-PP. Shows no activity with pyridoxal, pyridoxamine or pyridoxine. Does not show phosphatase activity. The sequence is that of Hydroxylmethylpyrimidine kinase from Acinetobacter baumannii (strain IS-123).